A 401-amino-acid chain; its full sequence is Acetate kinase (401 aa).

Asn10 is a binding site for Mg(2+). Lys17 contributes to the ATP binding site. Residue Arg91 participates in substrate binding. Asp150 (proton donor/acceptor) is an active-site residue. Residues 210 to 214 (HLGNG), 285 to 287 (DCR), and 333 to 337 (GIGEN) contribute to the ATP site. Glu387 serves as a coordination point for Mg(2+).

The protein belongs to the acetokinase family. Homodimer. It depends on Mg(2+) as a cofactor. Requires Mn(2+) as cofactor.

The protein resides in the cytoplasm. It carries out the reaction acetate + ATP = acetyl phosphate + ADP. It functions in the pathway metabolic intermediate biosynthesis; acetyl-CoA biosynthesis; acetyl-CoA from acetate: step 1/2. Catalyzes the formation of acetyl phosphate from acetate and ATP. Can also catalyze the reverse reaction. This is Acetate kinase from Pasteurella multocida (strain Pm70).